Reading from the N-terminus, the 795-residue chain is Protocadherin beta-5 (795 aa).

The N-terminal stretch at 1–30 (METALAKTPQKRQVMFLAILLLLWEAGSEA) is a signal peptide. Over 31-689 (VRYSIPEETE…AQADSLTVYL (659 aa)) the chain is Extracellular. Cadherin domains are found at residues 35–133 (IPEE…SPEF), 138–242 (MLLK…APEF), 247–346 (YEVQ…APEL), 351–450 (LSSP…APAF), and 455–560 (YTLF…SPFV). The N-linked (GlcNAc...) asparagine glycan is linked to Asn169. The residue at position 296 (Lys296) is an N6-acetyllysine. 2 N-linked (GlcNAc...) asparagine glycosylation sites follow: Asn417 and Asn435. A glycan (N-linked (GlcNAc...) asparagine) is linked at Asn566. In terms of domain architecture, Cadherin 6 spans 567 to 670 (GSAPCTELVP…LVDGFSQPYL (104 aa)). Residues 690 to 710 (VVALASVSSLFLFSVLLFVAV) traverse the membrane as a helical segment. Over 711–795 (RLCRRSRAAP…AAFRNSFGLN (85 aa)) the chain is Cytoplasmic.

It is found in the cell membrane. In terms of biological role, potential calcium-dependent cell-adhesion protein. May be involved in the establishment and maintenance of specific neuronal connections in the brain. This chain is Protocadherin beta-5 (PCDHB5), found in Pan troglodytes (Chimpanzee).